Reading from the N-terminus, the 807-residue chain is FAD-linked oxidoreductase pytB (807 aa).

Positions 1 to 18 are cleaved as a signal peptide; the sequence is MRFLGIAAVATFSTVVSA. N-linked (GlcNAc...) asparagine glycans are attached at residues N45, N106, N120, N242, N295, N351, N419, and N699. The FAD-binding PCMH-type domain maps to 60 to 231; the sequence is FDELPVLLAY…VEFTLSLTSI (172 aa).

It belongs to the oxygen-dependent FAD-linked oxidoreductase family. FAD is required as a cofactor.

Its pathway is secondary metabolite biosynthesis. Functionally, FAD-linked oxidoreductase; part of the gene cluster that mediates the biosynthesis of pyranterreones, a family of antioxidative compounds. The first step of pyranonigrins biosynthesis is performed by the hybrid PKS-NRPS synthetase pytA that condenses 4 malonyl-CoA units ato the acetyl starter unit by the modular PKS of pytA. The acyl chain is then connected to an L-serine through the amide bond by the modular NRPS of pytA. A tetramic acid is formed and released from the PKS-NRPS pytA to give pyranterreone 5 with the help of the thioesterase pytI. Pyranterreone 5 could be methylated by pytC to afford pyranterreone 6. Both pyranterreones 5 and 6 are subsequently oxidized by the FAD-linked oxidoreductase pytB and the cytochrome P450 monooxygenase pytD to form the fused gamma-pyrone core, resulting in pyranterreones 7 and 11, respectively. The hydroxy group at C-8 of pyranterreones 7 and 11 are dehydrated by the aspartyl protease pytH to form a delta-7 double bond to give pyranterreones 3 and 1, 2 accordingly. The exo-methylene of pyranterreone 3 could be reduced into a pendant methyl by reductase pytE to provide pyranterreone 4, also known as cordylactam. Pyranterreone 4 can be reconverted to pyranterreone 3 through pytB-catalyzed dehydrogenation or further oxidized to pyranterreones 9 and 10. The polypeptide is FAD-linked oxidoreductase pytB (Aspergillus terreus (strain NIH 2624 / FGSC A1156)).